The sequence spans 405 residues: Acetate kinase (405 aa).

Asparagine 13 lines the Mg(2+) pocket. Residue lysine 20 coordinates ATP. Arginine 94 contacts substrate. Catalysis depends on aspartate 153, which acts as the Proton donor/acceptor. ATP is bound by residues 213-217, 288-290, and 336-340; these read HLGNG, DFR, and GIGEN. Glutamate 390 lines the Mg(2+) pocket.

The protein belongs to the acetokinase family. Homodimer. The cofactor is Mg(2+). It depends on Mn(2+) as a cofactor.

The protein localises to the cytoplasm. The enzyme catalyses acetate + ATP = acetyl phosphate + ADP. It functions in the pathway metabolic intermediate biosynthesis; acetyl-CoA biosynthesis; acetyl-CoA from acetate: step 1/2. Catalyzes the formation of acetyl phosphate from acetate and ATP. Can also catalyze the reverse reaction. This Buchnera aphidicola subsp. Acyrthosiphon pisum (strain APS) (Acyrthosiphon pisum symbiotic bacterium) protein is Acetate kinase.